Reading from the N-terminus, the 511-residue chain is Ribonuclease E/G-like protein (511 aa).

One can recognise an S1 motif domain in the interval 35–117 (SDIYLGTVDK…LTANITLSGR (83 aa)). Mg(2+) contacts are provided by Asp-296 and Asp-339.

Belongs to the RNase E/G family. Mg(2+) is required as a cofactor.

The protein localises to the plastid. The protein resides in the chloroplast stroma. In terms of biological role, involved in intercistronic processing of primary transcripts from chloroplast operons. The endonucleolytic activity of the enzyme depends on the number of phosphates at the 5' end, is inhibited by structured RNA, and preferentially cleaves A/U-rich sequences. The polypeptide is Ribonuclease E/G-like protein (rne) (Porphyra purpurea (Red seaweed)).